The following is a 476-amino-acid chain: Aspartyl/glutamyl-tRNA(Asn/Gln) amidotransferase subunit B (476 aa).

It belongs to the GatB/GatE family. GatB subfamily. In terms of assembly, heterotrimer of A, B and C subunits.

The catalysed reaction is L-glutamyl-tRNA(Gln) + L-glutamine + ATP + H2O = L-glutaminyl-tRNA(Gln) + L-glutamate + ADP + phosphate + H(+). It carries out the reaction L-aspartyl-tRNA(Asn) + L-glutamine + ATP + H2O = L-asparaginyl-tRNA(Asn) + L-glutamate + ADP + phosphate + 2 H(+). Functionally, allows the formation of correctly charged Asn-tRNA(Asn) or Gln-tRNA(Gln) through the transamidation of misacylated Asp-tRNA(Asn) or Glu-tRNA(Gln) in organisms which lack either or both of asparaginyl-tRNA or glutaminyl-tRNA synthetases. The reaction takes place in the presence of glutamine and ATP through an activated phospho-Asp-tRNA(Asn) or phospho-Glu-tRNA(Gln). This chain is Aspartyl/glutamyl-tRNA(Asn/Gln) amidotransferase subunit B, found in Clostridium botulinum (strain ATCC 19397 / Type A).